Here is a 305-residue protein sequence, read N- to C-terminus: UDP-3-O-acyl-N-acetylglucosamine deacetylase (305 aa).

Zn(2+) is bound by residues His78, His237, and Asp241. His264 serves as the catalytic Proton donor.

It belongs to the LpxC family. Requires Zn(2+) as cofactor.

The enzyme catalyses a UDP-3-O-[(3R)-3-hydroxyacyl]-N-acetyl-alpha-D-glucosamine + H2O = a UDP-3-O-[(3R)-3-hydroxyacyl]-alpha-D-glucosamine + acetate. The protein operates within glycolipid biosynthesis; lipid IV(A) biosynthesis; lipid IV(A) from (3R)-3-hydroxytetradecanoyl-[acyl-carrier-protein] and UDP-N-acetyl-alpha-D-glucosamine: step 2/6. Functionally, catalyzes the hydrolysis of UDP-3-O-myristoyl-N-acetylglucosamine to form UDP-3-O-myristoylglucosamine and acetate, the committed step in lipid A biosynthesis. The chain is UDP-3-O-acyl-N-acetylglucosamine deacetylase from Paraburkholderia xenovorans (strain LB400).